The chain runs to 463 residues: Fumarate hydratase class II (463 aa).

Residues 98–100 (SGT), 129–132 (HPND), 139–141 (SSN), and Thr187 each bind substrate. His188 (proton donor/acceptor) is an active-site residue. Ser318 is a catalytic residue. Residues Ser319 and 324 to 326 (KVN) contribute to the substrate site.

This sequence belongs to the class-II fumarase/aspartase family. Fumarase subfamily. As to quaternary structure, homotetramer.

Its subcellular location is the cytoplasm. The enzyme catalyses (S)-malate = fumarate + H2O. The protein operates within carbohydrate metabolism; tricarboxylic acid cycle; (S)-malate from fumarate: step 1/1. Functionally, involved in the TCA cycle. Catalyzes the stereospecific interconversion of fumarate to L-malate. This chain is Fumarate hydratase class II, found in Caulobacter vibrioides (strain ATCC 19089 / CIP 103742 / CB 15) (Caulobacter crescentus).